The following is a 262-amino-acid chain: Acyl-[acyl-carrier-protein]--UDP-N-acetylglucosamine O-acyltransferase (262 aa).

This sequence belongs to the transferase hexapeptide repeat family. LpxA subfamily. As to quaternary structure, homotrimer.

It is found in the cytoplasm. The catalysed reaction is a (3R)-hydroxyacyl-[ACP] + UDP-N-acetyl-alpha-D-glucosamine = a UDP-3-O-[(3R)-3-hydroxyacyl]-N-acetyl-alpha-D-glucosamine + holo-[ACP]. Its pathway is glycolipid biosynthesis; lipid IV(A) biosynthesis; lipid IV(A) from (3R)-3-hydroxytetradecanoyl-[acyl-carrier-protein] and UDP-N-acetyl-alpha-D-glucosamine: step 1/6. In terms of biological role, involved in the biosynthesis of lipid A, a phosphorylated glycolipid that anchors the lipopolysaccharide to the outer membrane of the cell. The chain is Acyl-[acyl-carrier-protein]--UDP-N-acetylglucosamine O-acyltransferase from Salmonella typhi.